The following is a 303-amino-acid chain: D-alanine--D-alanine ligase (303 aa).

An ATP-grasp domain is found at 100–295 (KQLLRRHGIL…FPALIARLIE (196 aa)). An ATP-binding site is contributed by 127-180 (GLGYPLFVKPNTGGSSLCLSRVTQPEGLAPALEAVFAHCGEAIVEPAIPGVEVT). Mg(2+) is bound by residues D249, E262, and N264.

It belongs to the D-alanine--D-alanine ligase family. Mg(2+) serves as cofactor. The cofactor is Mn(2+).

Its subcellular location is the cytoplasm. The enzyme catalyses 2 D-alanine + ATP = D-alanyl-D-alanine + ADP + phosphate + H(+). It functions in the pathway cell wall biogenesis; peptidoglycan biosynthesis. In terms of biological role, cell wall formation. The protein is D-alanine--D-alanine ligase of Nitratidesulfovibrio vulgaris (strain DP4) (Desulfovibrio vulgaris).